The chain runs to 257 residues: Indole-3-glycerol phosphate synthase (257 aa).

The protein belongs to the TrpC family.

It carries out the reaction 1-(2-carboxyphenylamino)-1-deoxy-D-ribulose 5-phosphate + H(+) = (1S,2R)-1-C-(indol-3-yl)glycerol 3-phosphate + CO2 + H2O. It participates in amino-acid biosynthesis; L-tryptophan biosynthesis; L-tryptophan from chorismate: step 4/5. The sequence is that of Indole-3-glycerol phosphate synthase (trpC) from Aquifex aeolicus (strain VF5).